The chain runs to 379 residues: Succinate--CoA ligase [ADP-forming] subunit beta (379 aa).

Positions K9–I235 constitute an ATP-grasp domain. Positions 45, 91, 94, and 99 each coordinate ATP. Mg(2+)-binding residues include N191 and D205. Substrate-binding positions include N255 and G312–T314.

It belongs to the succinate/malate CoA ligase beta subunit family. In terms of assembly, heterotetramer of two alpha and two beta subunits. Mg(2+) serves as cofactor.

It catalyses the reaction succinate + ATP + CoA = succinyl-CoA + ADP + phosphate. The catalysed reaction is GTP + succinate + CoA = succinyl-CoA + GDP + phosphate. It functions in the pathway carbohydrate metabolism; tricarboxylic acid cycle; succinate from succinyl-CoA (ligase route): step 1/1. In terms of biological role, succinyl-CoA synthetase functions in the citric acid cycle (TCA), coupling the hydrolysis of succinyl-CoA to the synthesis of either ATP or GTP and thus represents the only step of substrate-level phosphorylation in the TCA. The beta subunit provides nucleotide specificity of the enzyme and binds the substrate succinate, while the binding sites for coenzyme A and phosphate are found in the alpha subunit. In Staphylothermus marinus (strain ATCC 43588 / DSM 3639 / JCM 9404 / F1), this protein is Succinate--CoA ligase [ADP-forming] subunit beta.